The primary structure comprises 179 residues: Coiled-coil domain-containing protein 32 (179 aa).

A coiled-coil region spans residues 75 to 98 (EVYLASLEKKLRRIKGLNEEVTSK). Positions 157–179 (FLIPPESQAEKPEARDEPAAAEQ) are disordered. Residues 164–179 (QAEKPEARDEPAAAEQ) are compositionally biased toward basic and acidic residues.

In terms of assembly, interacts with AP2S1; the interaction is direct and mediates association with adaptor protein complex 2 (AP-2).

The protein resides in the membrane. It localises to the coated pit. Functionally, regulates clathrin-mediated endocytsois of cargos such as transferrin probably through the association and modulation of adaptor protein complex 2 (AP-2). Has a role in ciliogenesis. Required for proper cephalic and left/right axis development. The polypeptide is Coiled-coil domain-containing protein 32 (Ccdc32) (Rattus norvegicus (Rat)).